Reading from the N-terminus, the 201-residue chain is FMN-dependent NADH:quinone oxidoreductase (201 aa).

Residues Ser-10, 16–18 (SQS), 96–99 (MYNF), and 140–143 (SRGG) contribute to the FMN site.

This sequence belongs to the azoreductase type 1 family. Homodimer. FMN is required as a cofactor.

The enzyme catalyses 2 a quinone + NADH + H(+) = 2 a 1,4-benzosemiquinone + NAD(+). The catalysed reaction is N,N-dimethyl-1,4-phenylenediamine + anthranilate + 2 NAD(+) = 2-(4-dimethylaminophenyl)diazenylbenzoate + 2 NADH + 2 H(+). Its function is as follows. Quinone reductase that provides resistance to thiol-specific stress caused by electrophilic quinones. Also exhibits azoreductase activity. Catalyzes the reductive cleavage of the azo bond in aromatic azo compounds to the corresponding amines. This chain is FMN-dependent NADH:quinone oxidoreductase, found in Shigella boydii serotype 4 (strain Sb227).